The sequence spans 622 residues: FERM domain-containing protein 6 (622 aa).

The FERM domain maps to 16–328; the sequence is RRVCIFLPND…NSHRLYMNLQ (313 aa). The interval 357–452 is disordered; sequence LDMDPLEKRS…KDRLEEDSQD (96 aa). Composition is skewed to low complexity over residues 384–395 and 425–438; these read HSTASHSSSHTS and SSMT…TSGV. Serine 522 bears the Phosphoserine mark. Phosphothreonine is present on threonine 523. Phosphoserine is present on residues serine 525, serine 542, and serine 544.

Its subcellular location is the cytoplasm. It is found in the cell membrane. The protein is FERM domain-containing protein 6 (Frmd6) of Mus musculus (Mouse).